A 526-amino-acid chain; its full sequence is Lycopene epsilon cyclase, chloroplastic (526 aa).

108–136 lines the NAD(+) pocket; that stretch reads LVVIGCGPAGLALAAESAKLGLNVGLVGP. The next 2 helical transmembrane spans lie at 443–463 and 477–497; these read FFLF…RSFF and FLGS…MFII.

The protein belongs to the lycopene cyclase family.

The protein resides in the plastid. It is found in the chloroplast membrane. The enzyme catalyses a carotenoid psi-end group = a carotenoid epsilon-end group. Its pathway is carotenoid biosynthesis; alpha-zeacarotene biosynthesis. It participates in carotenoid biosynthesis; delta-carotene biosynthesis. Catalyzes the single cyclization reaction which converts lycopene to delta-carotene and neurosporene to alpha-zeacarotene. Required for lutein biosynthesis. The protein is Lycopene epsilon cyclase, chloroplastic of Solanum lycopersicum (Tomato).